A 455-amino-acid polypeptide reads, in one-letter code: EP1-like glycoprotein 1 (455 aa).

An N-terminal signal peptide occupies residues 1 to 22; the sequence is MLRFDYLLITALAISTVSVVMA. Residues 43-163 enclose the Bulb-type lectin domain; the sequence is TEYDASYRFL…HGKFVWQSFD (121 aa). N-linked (GlcNAc...) asparagine glycosylation is found at asparagine 106, asparagine 191, asparagine 211, asparagine 241, and asparagine 289. Cysteine 374 is subject to S-nitrosocysteine. A PAN domain is found at 374–455; that stretch reads CSGGKGKAVN…NTSSVAYIKY (82 aa). Intrachain disulfides connect cysteine 410/cysteine 432 and cysteine 414/cysteine 420. An N-linked (GlcNAc...) asparagine glycan is attached at asparagine 446.

It is found in the secreted. The protein localises to the cell wall. The polypeptide is EP1-like glycoprotein 1 (Arabidopsis thaliana (Mouse-ear cress)).